The sequence spans 99 residues: Aspartyl/glutamyl-tRNA(Asn/Gln) amidotransferase subunit C (99 aa).

It belongs to the GatC family. Heterotrimer of A, B and C subunits.

The enzyme catalyses L-glutamyl-tRNA(Gln) + L-glutamine + ATP + H2O = L-glutaminyl-tRNA(Gln) + L-glutamate + ADP + phosphate + H(+). It carries out the reaction L-aspartyl-tRNA(Asn) + L-glutamine + ATP + H2O = L-asparaginyl-tRNA(Asn) + L-glutamate + ADP + phosphate + 2 H(+). Allows the formation of correctly charged Asn-tRNA(Asn) or Gln-tRNA(Gln) through the transamidation of misacylated Asp-tRNA(Asn) or Glu-tRNA(Gln) in organisms which lack either or both of asparaginyl-tRNA or glutaminyl-tRNA synthetases. The reaction takes place in the presence of glutamine and ATP through an activated phospho-Asp-tRNA(Asn) or phospho-Glu-tRNA(Gln). In Sulfurihydrogenibium sp. (strain YO3AOP1), this protein is Aspartyl/glutamyl-tRNA(Asn/Gln) amidotransferase subunit C.